A 105-amino-acid polypeptide reads, in one-letter code: Thioredoxin-like protein slr0233 (105 aa).

The region spanning Met-1–Gln-102 is the Thioredoxin domain. A disulfide bridge connects residues Cys-30 and Cys-33.

The protein belongs to the thioredoxin family.

The polypeptide is Thioredoxin-like protein slr0233 (Synechocystis sp. (strain ATCC 27184 / PCC 6803 / Kazusa)).